Here is a 405-residue protein sequence, read N- to C-terminus: Palmitoyltransferase PFA5 (405 aa).

The next 5 helical transmembrane spans lie at 12–32, 51–71, 154–174, 191–211, and 310–330; these read YIKL…NYAI, IILW…WVLI, LFFM…LIYC, FIVL…LFGI, and FYTL…FIDI. A DHHC domain is found at 111 to 161; the sequence is YYCSNSNSIKLERSFFSKDVGYNVIKFDHYCIWIGQPIGQDNYLFFMKFMM.

This sequence belongs to the DHHC palmitoyltransferase family. PFA5 subfamily. Autopalmitoylated.

It localises to the membrane. It catalyses the reaction L-cysteinyl-[protein] + hexadecanoyl-CoA = S-hexadecanoyl-L-cysteinyl-[protein] + CoA. This is Palmitoyltransferase PFA5 (PFA5) from Candida albicans (strain SC5314 / ATCC MYA-2876) (Yeast).